A 194-amino-acid chain; its full sequence is Adenylate kinase isoenzyme 1 (194 aa).

N-acetylmethionine is present on Met1. Gly18–Thr23 serves as a coordination point for ATP. The residue at position 38 (Ser38) is a Phosphoserine. Residues Ser38–Val67 form an NMP region. AMP is bound by residues Thr39, Arg44, Gln65–Val67, Gly94–Arg97, and Gln101. Residues Lys131–Asp141 form an LID region. Arg132 lines the ATP pocket. AMP-binding residues include Arg138 and Arg149. Residue Gly177 coordinates ATP.

It belongs to the adenylate kinase family. AK1 subfamily. In terms of assembly, monomer. The cofactor is Mg(2+).

It is found in the cytoplasm. The enzyme catalyses a ribonucleoside 5'-phosphate + ATP = a ribonucleoside 5'-diphosphate + ADP. It catalyses the reaction AMP + ATP = 2 ADP. It carries out the reaction dAMP + ATP = dADP + ADP. The catalysed reaction is dATP + AMP = dADP + ADP. The enzyme catalyses dAMP + dATP = 2 dADP. It catalyses the reaction a 2'-deoxyribonucleoside 5'-diphosphate + ATP = a 2'-deoxyribonucleoside 5'-triphosphate + ADP. It carries out the reaction a ribonucleoside 5'-diphosphate + ATP = a ribonucleoside 5'-triphosphate + ADP. The catalysed reaction is CDP + GTP = CTP + GDP. The enzyme catalyses GDP + ATP = GTP + ADP. It catalyses the reaction UDP + ATP = UTP + ADP. It carries out the reaction GTP + UDP = UTP + GDP. The catalysed reaction is dTDP + GTP = dTTP + GDP. The enzyme catalyses dCDP + GTP = dCTP + GDP. It catalyses the reaction dGDP + ATP = dGTP + ADP. It carries out the reaction dADP + GTP = dATP + GDP. The catalysed reaction is thiamine diphosphate + ADP = thiamine triphosphate + AMP. In terms of biological role, catalyzes the reversible transfer of the terminal phosphate group between ATP and AMP. Also displays broad nucleoside diphosphate kinase activity. Plays an important role in cellular energy homeostasis and in adenine nucleotide metabolism. Also catalyzes at a very low rate the synthesis of thiamine triphosphate (ThTP) from thiamine diphosphate (ThDP) and ADP. This is Adenylate kinase isoenzyme 1 from Sus scrofa (Pig).